A 715-amino-acid polypeptide reads, in one-letter code: Ribosomal RNA large subunit methyltransferase K/L (715 aa).

One can recognise a THUMP domain in the interval 47–158; that stretch reads LGYKISLWTR…RDNVTIFLDF (112 aa).

It belongs to the methyltransferase superfamily. RlmKL family.

The protein localises to the cytoplasm. The enzyme catalyses guanosine(2445) in 23S rRNA + S-adenosyl-L-methionine = N(2)-methylguanosine(2445) in 23S rRNA + S-adenosyl-L-homocysteine + H(+). The catalysed reaction is guanosine(2069) in 23S rRNA + S-adenosyl-L-methionine = N(2)-methylguanosine(2069) in 23S rRNA + S-adenosyl-L-homocysteine + H(+). In terms of biological role, specifically methylates the guanine in position 2445 (m2G2445) and the guanine in position 2069 (m7G2069) of 23S rRNA. The chain is Ribosomal RNA large subunit methyltransferase K/L from Colwellia psychrerythraea (strain 34H / ATCC BAA-681) (Vibrio psychroerythus).